The sequence spans 343 residues: Glyceraldehyde-3-phosphate dehydrogenase (343 aa).

Residues 12 to 13 and glycine 114 contribute to the NAD(+) site; that span reads SI. 143 to 145 provides a ligand contact to D-glyceraldehyde 3-phosphate; sequence SCN. Catalysis depends on cysteine 144, which acts as the Nucleophile. Residue arginine 172 participates in NAD(+) binding. 198-199 provides a ligand contact to D-glyceraldehyde 3-phosphate; it reads HG. Glutamine 307 is a binding site for NAD(+).

It belongs to the glyceraldehyde-3-phosphate dehydrogenase family. As to quaternary structure, homotetramer.

The protein resides in the cytoplasm. The catalysed reaction is D-glyceraldehyde 3-phosphate + phosphate + NADP(+) = (2R)-3-phospho-glyceroyl phosphate + NADPH + H(+). It catalyses the reaction D-glyceraldehyde 3-phosphate + phosphate + NAD(+) = (2R)-3-phospho-glyceroyl phosphate + NADH + H(+). Its pathway is carbohydrate degradation; glycolysis; pyruvate from D-glyceraldehyde 3-phosphate: step 1/5. The chain is Glyceraldehyde-3-phosphate dehydrogenase (gap) from Methanocaldococcus jannaschii (strain ATCC 43067 / DSM 2661 / JAL-1 / JCM 10045 / NBRC 100440) (Methanococcus jannaschii).